A 155-amino-acid chain; its full sequence is Acetylaranotin biosynthesis cluster protein L (155 aa).

Its pathway is mycotoxin biosynthesis. In terms of biological role, nonribosomal peptide synthetase; part of the gene cluster that mediates the biosynthesis of acetylaranotin, a member of the epipolythiodioxopiperazine (ETP) class of toxins characterized by a disulfide-bridged cyclic dipeptide. The first step of acetylaranotin biosynthesis is performed by the NRPS ataP which produces diketopiperazine cyclo-L-Phe-L-Phe via the condensation of 2 phenylalanines (L-Phe). The ataC domain of ataTC then catalyzes the formation of bishydroxylation of cyclo-L-Phe-L-Phe. The glutathione S-transferase domain ataG in ataIMG further catalyzes the conjugation of two glutathiones to the bishydroxylated intermediate. Next, the dipeptidase ataJ removes the Glu residues. The following step is performed by the carbon sulfur lyase domain ataI of ataIMG which may convert the bis-cysteinyl adduct to yield an epidithiol intermediate. The ataT domain from ataTC then catalyzes the oxidation of the free dithiols, followed by a cyclization step catalyzed by the cytochrome P450 ataF. AtaF probably acts as an epoxidase to promote a dual epoxidation formation at C8 and C9 along with C8' and C9', followed by the spontaneous nucleophilic attack of the amide nitrogens N10 and N10' to yield an intermediate with the pyrrolidine partial structure. The final steps of acetylaranotin biosynthesis involve the acetylation and ring rearrangement of an epitetrathiodiketopiperazine intermediate to produce acetylaranotin. AtaH probably catalyzes the acetylation of epitetrathiodiketopiperazine to produce a diacetate and ataY is responsible for the formation of the dihydrooxepin moiety that converts the diacetate intermediate to acetylaranotin via acetylapoaranotin. Both enzymes could function independently in the absence of the other. The specific function of ataL within the pathway has still to be determined. The acetylaranotin bis-thiomethyltransferase ataS located outside of acetylaranotin gene cluster is the main thiomethyltransferase responsible for converting acetylaranotin and its related intermediates to their methylated forms. The chain is Acetylaranotin biosynthesis cluster protein L from Aspergillus terreus (strain NIH 2624 / FGSC A1156).